The primary structure comprises 526 residues: Dual specificity tyrosine-phosphorylation-regulated kinase 2 (526 aa).

2 stretches are compositionally biased toward polar residues: residues 30–40 (TTQPNGLTTLG) and 60–70 (GSSSSLKSTDG). The tract at residues 30 to 76 (TTQPNGLTTLGKSGLPVVQDRQSESAHRRQGSSSSLKSTDGTGKVKA) is disordered. Thr-31 bears the Phosphothreonine; by ATM mark. The Nuclear localization signal signature appears at 114 to 116 (KKR). The Protein kinase domain occupies 147-460 (YEVLKVIGKG…PSQALRHPWL (314 aa)). ATP is bound by residues 153-161 (IGKGSFGQV), Lys-176, and 226-229 (FELL). Asp-273 serves as the catalytic Proton acceptor. At Tyr-307 the chain carries Phosphotyrosine. The residue at position 367 (Ser-367) is a Phosphoserine; by ATM. The disordered stretch occupies residues 462 to 499 (RRLPKPPTGEKASAKRITESTGAITSISKLPPTSSSAS). Positions 480-499 (ESTGAITSISKLPPTSSSAS) are enriched in polar residues.

Belongs to the protein kinase superfamily. CMGC Ser/Thr protein kinase family. MNB/DYRK subfamily. In terms of assembly, interacts with MDM2. It depends on Mg(2+) as a cofactor. The cofactor is Mn(2+). Post-translationally, phosphorylated on serine/threonine residues. Phosphorylation on Thr-31 and Ser-367 by ATM in response to genotoxic stress disrupts MDM2 binding and prevents MDM2-mediated ubiquitination and subsequent proteasome degradation, thus promoting p53/TP53-mediated apoptosis. Ubiquitination in nucleus by MDM2 in normal conditions leads to proteasome degradation.

The protein resides in the cytoplasm. It localises to the nucleus. It carries out the reaction L-seryl-[protein] + ATP = O-phospho-L-seryl-[protein] + ADP + H(+). The catalysed reaction is L-threonyl-[protein] + ATP = O-phospho-L-threonyl-[protein] + ADP + H(+). It catalyses the reaction L-tyrosyl-[protein] + ATP = O-phospho-L-tyrosyl-[protein] + ADP + H(+). With respect to regulation, autophosphorylates on tyrosine residues. In terms of biological role, serine/threonine-protein kinase involved in the control of mitotic transition and the regulation of cellular growth and/or development. This is Dual specificity tyrosine-phosphorylation-regulated kinase 2 from Gallus gallus (Chicken).